The chain runs to 198 residues: CASP-like protein 2B1 (198 aa).

The Cytoplasmic segment spans residues 1 to 12 (MAAAMGLERKAK). Residues 13-33 (VAEVALRCAVCALAALAAALV) traverse the membrane as a helical segment. Residues 34–55 (GTGSQTRTFFSLEKKARFTDMK) are Extracellular-facing. Residues 56-76 (ALVLLVAAHGAAAVYSLLQLA) form a helical membrane-spanning segment. Residues 77–91 (RCAAAAAWKGGSNGG) are Cytoplasmic-facing. A helical membrane pass occupies residues 92-112 (AAVVAWSVFSCDQAVAYALMA). Topologically, residues 113-149 (ATAAALQSSVVGKRGQPELQWMPVCGLYGAFCRRVGE) are extracellular. A helical transmembrane segment spans residues 150 to 170 (GLAAAVAAGLAAVLLAAVSAF). Over 171-198 (NLFRLYGGGGGGRKSSAGAVSGNGANTW) the chain is Cytoplasmic.

The protein belongs to the Casparian strip membrane proteins (CASP) family. Homodimer and heterodimers.

It localises to the cell membrane. The sequence is that of CASP-like protein 2B1 from Oryza sativa subsp. japonica (Rice).